Reading from the N-terminus, the 580-residue chain is NADH-quinone oxidoreductase subunit C/D (580 aa).

Residues 1–171 (MSFDQVIADA…PPFVLTDRLF (171 aa)) form an NADH dehydrogenase I subunit C region. The segment at 195–580 (ELMVLNFGPH…IDFVMSDVDR (386 aa)) is NADH dehydrogenase I subunit D.

This sequence in the N-terminal section; belongs to the complex I 30 kDa subunit family. The protein in the C-terminal section; belongs to the complex I 49 kDa subunit family. As to quaternary structure, NDH-1 is composed of 13 different subunits. Subunits NuoB, CD, E, F, and G constitute the peripheral sector of the complex.

Its subcellular location is the cell inner membrane. It carries out the reaction a quinone + NADH + 5 H(+)(in) = a quinol + NAD(+) + 4 H(+)(out). In terms of biological role, NDH-1 shuttles electrons from NADH, via FMN and iron-sulfur (Fe-S) centers, to quinones in the respiratory chain. The immediate electron acceptor for the enzyme in this species is believed to be ubiquinone. Couples the redox reaction to proton translocation (for every two electrons transferred, four hydrogen ions are translocated across the cytoplasmic membrane), and thus conserves the redox energy in a proton gradient. The polypeptide is NADH-quinone oxidoreductase subunit C/D (Cereibacter sphaeroides (strain ATCC 17025 / ATH 2.4.3) (Rhodobacter sphaeroides)).